Consider the following 1242-residue polypeptide: Myosin-16 (1242 aa).

Residues 6-55 (MVDSHVWVEDPERAWIDGVVLNIKGEEAEIKTNDGRDVIANLSRLYPKDT) form the Myosin N-terminal SH3-like domain. The region spanning 60–729 (EGVEDMTRLS…QMAELDAHRT (670 aa)) is the Myosin motor domain. Residues 154 to 161 (GESGSGKT) and 207 to 215 (NNNSSRFGK) contribute to the ATP site. Actin-binding regions lie at residues 493–527 (LIEK…YHTF), 529–552 (DHKR…AGDV), 587–610 (FPPL…KLQL), and 610–632 (LQQL…KPNN). IQ domains lie at 732 to 761 (LGES…ASVN), 755 to 784 (MRRA…EEAA), 780 to 809 (REEA…SALT), 803 to 832 (TKSS…TRAA), 828 to 857 (TTRA…VSLL), and 851 to 880 (LKRV…ADRK). Disordered stretches follow at residues 869–893 (KQLG…ELSN) and 908–1042 (EQSD…ERKT). The span at 876–893 (QADRKEETEKERKVELSN) shows a compositional bias: basic and acidic residues. Tandem repeats lie at residues 876–908 (QADR…LHSE), 909–940 (QSDD…LHSE), 941–965 (QSDD…GHSD), 966–997 (QSDD…MHSD), 998–1029 (QSDD…VHSD), and 1030–1061 (QSDD…TCSE). A 6 X 33 AA repeats of Q-S-D-D-x-E-E-x(2)-H-x-R-K-x-K-x(2)-I-x(2)-E-D-G-x(3)-S-x-V-x-H-S-x region spans residues 876 to 1061 (QADRKEETEK…IQKSFVTCSE (186 aa)). Residues 948–966 (GHERKTKLSIESEDGHSDQ) show a composition bias toward basic and acidic residues. Positions 1079–1142 (DTEIESLTAE…QLQDSLNRLL (64 aa)) form a coiled coil. Residues 1175 to 1242 (DLADSSENSE…DKEGGFEDYF (68 aa)) are disordered. Residues 1179-1191 (SSENSEASSSDSD) show a composition bias toward low complexity. Residues 1199–1224 (PSSDNFSTFNPNQLQVIVQDLSTTEA) are compositionally biased toward polar residues. Residues 1225-1242 (KGTESYDSDKEGGFEDYF) are compositionally biased toward basic and acidic residues.

Belongs to the TRAFAC class myosin-kinesin ATPase superfamily. Myosin family. Plant myosin class XI subfamily. Homodimer. Expressed in flowers and leaves.

Its subcellular location is the cytoplasm. Its function is as follows. Myosin heavy chain that is required for the cell cycle-regulated transport of various organelles and proteins for their segregation. Functions by binding with its tail domain to receptor proteins on organelles and exerting force with its N-terminal motor domain against actin filaments, thereby transporting its cargo along polarized actin cables. This Arabidopsis thaliana (Mouse-ear cress) protein is Myosin-16 (XI-J).